Here is a 516-residue protein sequence, read N- to C-terminus: BAR/IMD domain-containing adapter protein 2-like 2 (516 aa).

Residues 1 to 227 form the IMD domain; it reads MSGVNSDLLH…PTPLDQEAQL (227 aa). The disordered stretch occupies residues 200 to 273; that stretch reads ADGWKEKVSE…SSSVGESLGL (74 aa). Basic and acidic residues predominate over residues 201 to 212; that stretch reads DGWKEKVSESRS. Positions 226–236 are enriched in polar residues; it reads QLKSSVGSLLQ. Basic and acidic residues predominate over residues 238–247; it reads GDREMDREPL. The segment covering 249 to 270 has biased composition (low complexity); sequence RVPSRAPSPLPSRSRSSSVGES. The SH3 domain maps to 274–337; the sequence is GGGRSMRAIV…PAAYVASTED (64 aa). Polar residues predominate over residues 355-376; the sequence is LLEPTSQSESDTQTYSEVSSPV. The disordered stretch occupies residues 355–516; sequence LLEPTSQSES…TNDRSAPRIQ (162 aa). Residues 434–450 show a composition bias toward basic and acidic residues; the sequence is PDRRAESHFESKVELKN. Over residues 454–465 the composition is skewed to pro residues; sequence LPPPAPPLPNSP.

The protein localises to the cell membrane. Functionally, phosphoinositides-binding protein that induces the formation of planar or gently curved membrane structures. The protein is BAR/IMD domain-containing adapter protein 2-like 2 (baiap2l2) of Danio rerio (Zebrafish).